Here is a 189-residue protein sequence, read N- to C-terminus: Elongation factor P (189 aa).

Lys34 is subject to N6-(3,6-diaminohexanoyl)-5-hydroxylysine.

Belongs to the elongation factor P family. In terms of processing, may be beta-lysylated on the epsilon-amino group of Lys-34 by the combined action of EpmA and EpmB, and then hydroxylated on the C5 position of the same residue by EpmC (if this protein is present). Lysylation is critical for the stimulatory effect of EF-P on peptide-bond formation. The lysylation moiety may extend toward the peptidyltransferase center and stabilize the terminal 3-CCA end of the tRNA. Hydroxylation of the C5 position on Lys-34 may allow additional potential stabilizing hydrogen-bond interactions with the P-tRNA.

The protein resides in the cytoplasm. Its pathway is protein biosynthesis; polypeptide chain elongation. In terms of biological role, involved in peptide bond synthesis. Alleviates ribosome stalling that occurs when 3 or more consecutive Pro residues or the sequence PPG is present in a protein, possibly by augmenting the peptidyl transferase activity of the ribosome. Modification of Lys-34 is required for alleviation. The polypeptide is Elongation factor P (Teredinibacter turnerae (strain ATCC 39867 / T7901)).